Reading from the N-terminus, the 285-residue chain is MLYLVGLGLADERDITVRGLEVVKKAERVYLEAYTAILLVDKAKLEAFYGRPVIEADRELVETGSDDILANADKVDVAFLVVGDPFGATTHTDLVLRARELGIESKVIPNASIMSGIGCTGLQLYNFGQTVSMVFFTETWKPSSYYDRVKENVQIGLHTLVLLDIKVKEQSLENMARGRLIYEPPRFMTVAQCAAQMLETEEERQEGVWGPDSLAVGAARVGAEDQKLVAGTLQELTQVDMGRPLHSLVLLGRRAHDLEKDYIRRFAVDEATFDAAWQNGKYGSS.

Residues Leu-9, Asp-84, Gly-87, 112-113, Leu-163, Val-221, and His-246 each bind S-adenosyl-L-methionine; that span reads SI.

Belongs to the diphthine synthase family.

It is found in the cytoplasm. The enzyme catalyses 2-[(3S)-amino-3-carboxypropyl]-L-histidyl-[translation elongation factor 2] + 4 S-adenosyl-L-methionine = diphthine methyl ester-[translation elongation factor 2] + 4 S-adenosyl-L-homocysteine + 3 H(+). The protein operates within protein modification; peptidyl-diphthamide biosynthesis. Functionally, S-adenosyl-L-methionine-dependent methyltransferase that catalyzes four methylations of the modified target histidine residue in translation elongation factor 2 (EF-2), to form an intermediate called diphthine methyl ester. The four successive methylation reactions represent the second step of diphthamide biosynthesis. In Emericella nidulans (strain FGSC A4 / ATCC 38163 / CBS 112.46 / NRRL 194 / M139) (Aspergillus nidulans), this protein is Diphthine methyl ester synthase (dph5).